The sequence spans 631 residues: Putative ATP-dependent DNA helicase Q1 (631 aa).

A Helicase ATP-binding domain is found at 118–293 (INAVMSKEDA…KDMLGIQAAL (176 aa)). 131-138 (LSTGGGKS) contributes to the ATP binding site. The short motif at 237–240 (DEVH) is the DEVH box element. Residues 318 to 466 (CTEEIAKTIK…NLYNMVRYAA (149 aa)) enclose the Helicase C-terminal domain. Residues Cys-471, Cys-489, Cys-493, and Cys-496 each coordinate Zn(2+). The interval 610–631 (ESKSRKRKASSSVEEEDVMVLD) is disordered. Residues 622–631 (VEEEDVMVLD) show a composition bias toward acidic residues.

Belongs to the helicase family. RecQ subfamily. Zn(2+) is required as a cofactor.

The protein resides in the nucleus. It carries out the reaction Couples ATP hydrolysis with the unwinding of duplex DNA by translocating in the 3'-5' direction.. It catalyses the reaction ATP + H2O = ADP + phosphate + H(+). Its function is as follows. DNA helicase that may play a role in the repair of DNA that is damaged by ultraviolet light or other mutagens. Exhibits a magnesium-dependent ATP-dependent DNA-helicase activity that unwinds single- and double-stranded DNA in a 3'-5' direction. The chain is Putative ATP-dependent DNA helicase Q1 from Caenorhabditis elegans.